Consider the following 180-residue polypeptide: UPF0227 protein Spro_1925 (180 aa).

It belongs to the UPF0227 family.

The protein is UPF0227 protein Spro_1925 of Serratia proteamaculans (strain 568).